Here is a 466-residue protein sequence, read N- to C-terminus: Ribulose bisphosphate carboxylase large chain (466 aa).

An N6,N6,N6-trimethyllysine modification is found at Lys5. Substrate-binding residues include Asn114 and Thr164. Lys166 acts as the Proton acceptor in catalysis. Lys168 lines the substrate pocket. Residues Lys192, Asp194, and Glu195 each contribute to the Mg(2+) site. At Lys192 the chain carries N6-carboxylysine. His285 serves as the catalytic Proton acceptor. Substrate is bound by residues Arg286, His318, and Ser370.

It belongs to the RuBisCO large chain family. Type I subfamily. As to quaternary structure, heterohexadecamer of 8 large chains and 8 small chains; disulfide-linked. The disulfide link is formed within the large subunit homodimers. Mg(2+) serves as cofactor. The disulfide bond which can form in the large chain dimeric partners within the hexadecamer appears to be associated with oxidative stress and protein turnover.

Its subcellular location is the plastid. It is found in the chloroplast. The enzyme catalyses 2 (2R)-3-phosphoglycerate + 2 H(+) = D-ribulose 1,5-bisphosphate + CO2 + H2O. It catalyses the reaction D-ribulose 1,5-bisphosphate + O2 = 2-phosphoglycolate + (2R)-3-phosphoglycerate + 2 H(+). In terms of biological role, ruBisCO catalyzes two reactions: the carboxylation of D-ribulose 1,5-bisphosphate, the primary event in carbon dioxide fixation, as well as the oxidative fragmentation of the pentose substrate in the photorespiration process. Both reactions occur simultaneously and in competition at the same active site. This Adoxa moschatellina (Moschatel) protein is Ribulose bisphosphate carboxylase large chain.